The sequence spans 47 residues: Defensin Ec-AMP-D1 (47 aa).

Cystine bridges form between cysteine 3–cysteine 47, cysteine 14–cysteine 34, cysteine 20–cysteine 41, and cysteine 24–cysteine 43.

Has antifungal activity. Inhibits spore germination in F.graminearum (IC(50)=15 ug/ml), F.oxysporum (IC(50)=102 ug/ml), F.verticillioides (IC(50)=8.5 ug/ml) and D.maydis (IC(50)=12.5 ug/ml), but not in C.graminicola, B.cinerea and H.sativum at concentrations below 30 ug/ml. Inhibits hyphal development in P.infestans (IC(50)=25.5 ug/ml), but not release of zoospores. At concentrations above 100 ug/ml, induces morphological changes such as lysis of hyphae and sporangia in P.infestans. The sequence is that of Defensin Ec-AMP-D1 from Echinochloa crus-galli (Barnyard grass).